We begin with the raw amino-acid sequence, 224 residues long: Flagellar L-ring protein (224 aa).

Residues 1–15 (MARYFILAAALLLTA) form the signal peptide. Cys-16 carries the N-palmitoyl cysteine lipid modification. The S-diacylglycerol cysteine moiety is linked to residue Cys-16.

The protein belongs to the FlgH family. The basal body constitutes a major portion of the flagellar organelle and consists of four rings (L,P,S, and M) mounted on a central rod.

It is found in the cell outer membrane. It localises to the bacterial flagellum basal body. Functionally, assembles around the rod to form the L-ring and probably protects the motor/basal body from shearing forces during rotation. This chain is Flagellar L-ring protein, found in Shewanella sp. (strain MR-4).